Here is a 140-residue protein sequence, read N- to C-terminus: ATP synthase epsilon chain (140 aa).

Belongs to the ATPase epsilon chain family. F-type ATPases have 2 components, CF(1) - the catalytic core - and CF(0) - the membrane proton channel. CF(1) has five subunits: alpha(3), beta(3), gamma(1), delta(1), epsilon(1). CF(0) has three main subunits: a, b and c.

The protein resides in the cell inner membrane. Produces ATP from ADP in the presence of a proton gradient across the membrane. The polypeptide is ATP synthase epsilon chain (Bdellovibrio bacteriovorus (strain ATCC 15356 / DSM 50701 / NCIMB 9529 / HD100)).